A 41-amino-acid chain; its full sequence is Hemoglobin subunit beta (41 aa).

The Globin domain maps to 1–41 (LGNVLVCVLAHHFGKEFTPQVQAAYQKVVAGVANALAHKYH). Lysine 39 bears the N6-acetyllysine mark.

This sequence belongs to the globin family. In terms of assembly, heterotetramer of two alpha chains and two beta chains. Red blood cells.

In terms of biological role, involved in oxygen transport from the lung to the various peripheral tissues. The sequence is that of Hemoglobin subunit beta (HBB) from Colobus guereza (Mantled guereza).